We begin with the raw amino-acid sequence, 274 residues long: Large ribosomal subunit protein uL2 (274 aa).

2 disordered regions span residues 35-60 (EPQHQKSGRNNNGHITTRHKGGGHKH) and 224-274 (VMNP…RRKK). A compositionally biased stretch (basic residues) spans 50–60 (TTRHKGGGHKH). Over residues 229–246 (DHPHGGGEGKTGEGRHAV) the composition is skewed to basic and acidic residues.

Belongs to the universal ribosomal protein uL2 family. In terms of assembly, part of the 50S ribosomal subunit. Forms a bridge to the 30S subunit in the 70S ribosome.

One of the primary rRNA binding proteins. Required for association of the 30S and 50S subunits to form the 70S ribosome, for tRNA binding and peptide bond formation. It has been suggested to have peptidyltransferase activity; this is somewhat controversial. Makes several contacts with the 16S rRNA in the 70S ribosome. This is Large ribosomal subunit protein uL2 from Delftia acidovorans (strain DSM 14801 / SPH-1).